We begin with the raw amino-acid sequence, 61 residues long: Small ribosomal subunit protein uS14 (61 aa).

Residues cysteine 24, cysteine 27, cysteine 40, and cysteine 43 each coordinate Zn(2+).

It belongs to the universal ribosomal protein uS14 family. Zinc-binding uS14 subfamily. In terms of assembly, part of the 30S ribosomal subunit. Contacts proteins S3 and S10. The cofactor is Zn(2+).

Functionally, binds 16S rRNA, required for the assembly of 30S particles and may also be responsible for determining the conformation of the 16S rRNA at the A site. In Frankia alni (strain DSM 45986 / CECT 9034 / ACN14a), this protein is Small ribosomal subunit protein uS14.